The sequence spans 480 residues: Serine/threonine-protein kinase WAG2 (480 aa).

Residues 88–396 enclose the Protein kinase domain; the sequence is LKLIRHLGTG…AQDIKRHPFF (309 aa). ATP-binding positions include 94-102 and lysine 117; that span reads LGTGNLGRV. Residue aspartate 213 is the Proton acceptor of the active site.

This sequence belongs to the protein kinase superfamily. Ser/Thr protein kinase family. As to expression, expressed in root tips, lateral root primordia and emerging true leaf primordia.

It is found in the cytoplasm. Its subcellular location is the cytosol. It catalyses the reaction L-seryl-[protein] + ATP = O-phospho-L-seryl-[protein] + ADP + H(+). The enzyme catalyses L-threonyl-[protein] + ATP = O-phospho-L-threonyl-[protein] + ADP + H(+). Functionally, serine/threonine-protein kinase involved in the regulation of auxin signaling. Acts as a positive regulator of cellular auxin efflux and regulates organ development by enhancing PIN-mediated polar auxin transport. Phosphorylates conserved serine residues in the PIN auxin efflux carriers. Phosphorylation of PIN proteins is required and sufficient for apical-basal PIN polarity that enables directional intercellular auxin fluxes, which mediate differential growth, tissue patterning and organogenesis. Acts as a suppressor of root waving. The polypeptide is Serine/threonine-protein kinase WAG2 (WAG2) (Arabidopsis thaliana (Mouse-ear cress)).